Consider the following 81-residue polypeptide: Teretoxin Tsu6.8 (81 aa).

The signal sequence occupies residues 1–21; the sequence is MATSGRLLCLCLVLGLIFESL. A propeptide spanning residues 22 to 45 is cleaved from the precursor; it reads GHPVMGEKRAGENASPSARSLPKR.

This sequence belongs to the teretoxin M (TM) superfamily. In terms of processing, contains 3 disulfide bonds. As to expression, expressed by the venom duct.

The protein resides in the secreted. In Terebra subulata (Chocolate spotted auger), this protein is Teretoxin Tsu6.8.